Here is a 360-residue protein sequence, read N- to C-terminus: Phospho-N-acetylmuramoyl-pentapeptide-transferase (360 aa).

Transmembrane regions (helical) follow at residues 27–47, 70–90, 93–113, 134–154, 168–188, 205–225, 239–259, 262–282, 288–308, and 337–357; these read GALI…ISSL, GTPT…SILW, LSSV…AIGF, LALE…AGQE, LLLN…VGAG, VMVA…AIFA, LSVI…FNAP, AIFM…TVAV, IVLA…IIQV, and QVVI…LSTL.

It belongs to the glycosyltransferase 4 family. MraY subfamily. Mg(2+) is required as a cofactor.

It is found in the cell inner membrane. The catalysed reaction is UDP-N-acetyl-alpha-D-muramoyl-L-alanyl-gamma-D-glutamyl-meso-2,6-diaminopimeloyl-D-alanyl-D-alanine + di-trans,octa-cis-undecaprenyl phosphate = di-trans,octa-cis-undecaprenyl diphospho-N-acetyl-alpha-D-muramoyl-L-alanyl-D-glutamyl-meso-2,6-diaminopimeloyl-D-alanyl-D-alanine + UMP. The protein operates within cell wall biogenesis; peptidoglycan biosynthesis. Its function is as follows. Catalyzes the initial step of the lipid cycle reactions in the biosynthesis of the cell wall peptidoglycan: transfers peptidoglycan precursor phospho-MurNAc-pentapeptide from UDP-MurNAc-pentapeptide onto the lipid carrier undecaprenyl phosphate, yielding undecaprenyl-pyrophosphoryl-MurNAc-pentapeptide, known as lipid I. The chain is Phospho-N-acetylmuramoyl-pentapeptide-transferase from Chelativorans sp. (strain BNC1).